We begin with the raw amino-acid sequence, 114 residues long: uncharacterized protein (114 aa).

The interval 90 to 114 (VESSQKRKPEESTIGMDAPKKMKRG) is disordered.

This is an uncharacterized protein from Caenorhabditis elegans.